A 129-amino-acid chain; its full sequence is Glycine cleavage system H protein (129 aa).

Positions 24-106 (SYTVGITEHA…FGDGWFFRVM (83 aa)) constitute a Lipoyl-binding domain. The residue at position 65 (lysine 65) is an N6-lipoyllysine.

This sequence belongs to the GcvH family. The glycine cleavage system is composed of four proteins: P, T, L and H. (R)-lipoate is required as a cofactor.

Functionally, the glycine cleavage system catalyzes the degradation of glycine. The H protein shuttles the methylamine group of glycine from the P protein to the T protein. The chain is Glycine cleavage system H protein from Shewanella frigidimarina (strain NCIMB 400).